The following is a 232-amino-acid chain: Putative N-acetylmannosamine-6-phosphate 2-epimerase (232 aa).

It belongs to the NanE family.

It carries out the reaction an N-acyl-D-glucosamine 6-phosphate = an N-acyl-D-mannosamine 6-phosphate. The protein operates within amino-sugar metabolism; N-acetylneuraminate degradation; D-fructose 6-phosphate from N-acetylneuraminate: step 3/5. In terms of biological role, converts N-acetylmannosamine-6-phosphate (ManNAc-6-P) to N-acetylglucosamine-6-phosphate (GlcNAc-6-P). This Borreliella afzelii (strain PKo) (Borrelia afzelii) protein is Putative N-acetylmannosamine-6-phosphate 2-epimerase.